A 255-amino-acid polypeptide reads, in one-letter code: 5'-nucleotidase SurE (255 aa).

Aspartate 16, aspartate 17, serine 47, and asparagine 100 together coordinate a divalent metal cation.

This sequence belongs to the SurE nucleotidase family. A divalent metal cation serves as cofactor.

The protein localises to the cytoplasm. It catalyses the reaction a ribonucleoside 5'-phosphate + H2O = a ribonucleoside + phosphate. In terms of biological role, nucleotidase that shows phosphatase activity on nucleoside 5'-monophosphates. This chain is 5'-nucleotidase SurE, found in Vibrio vulnificus (strain YJ016).